The chain runs to 383 residues: NifS-like protein (383 aa).

Residues 58-59 (SE) and 184-186 (SIN) each bind pyridoxal 5'-phosphate.

Belongs to the class-V pyridoxal-phosphate-dependent aminotransferase family. NifS/IscS subfamily. Requires pyridoxal 5'-phosphate as cofactor.

Its subcellular location is the virion. The polypeptide is NifS-like protein (African swine fever virus (strain Badajoz 1971 Vero-adapted) (Ba71V)).